A 549-amino-acid chain; its full sequence is Chaperonin GroEL 2 (549 aa).

ATP is bound by residues 30-33, K51, 87-91, G415, 479-481, and D495; these read TLGP, DGTTT, and NAA.

The protein belongs to the chaperonin (HSP60) family. Forms a cylinder of 14 subunits composed of two heptameric rings stacked back-to-back. Interacts with the co-chaperonin GroES.

The protein localises to the cytoplasm. It carries out the reaction ATP + H2O + a folded polypeptide = ADP + phosphate + an unfolded polypeptide.. Its function is as follows. Together with its co-chaperonin GroES, plays an essential role in assisting protein folding. The GroEL-GroES system forms a nano-cage that allows encapsulation of the non-native substrate proteins and provides a physical environment optimized to promote and accelerate protein folding. The chain is Chaperonin GroEL 2 from Polaromonas naphthalenivorans (strain CJ2).